Reading from the N-terminus, the 105-residue chain is Endogenous retrovirus group K member 104 Rec protein (105 aa).

A disordered region spans residues 1 to 43 (MNPSEMQRKAPPRRRRHCNRAPLTHKMNKMVTSEEEMKLPSTK). Basic residues predominate over residues 10–19 (APPRRRRHCN). A Nuclear localization signal motif is present at residues 13–20 (RRRRHCNR). Positions 50-59 (WAQLKKLTQL) match the Nuclear export signal motif.

Forms homodimers, homotrimers, and homotetramers via a C-terminal domain. Associates with XPO1 and with ZNF145.

The protein localises to the cytoplasm. Its subcellular location is the nucleus. It is found in the nucleolus. Its function is as follows. Retroviral replication requires the nuclear export and translation of unspliced, singly-spliced and multiply-spliced derivatives of the initial genomic transcript. Rec interacts with a highly structured RNA element (RcRE) present in the viral 3'LTR and recruits the cellular nuclear export machinery. This permits export to the cytoplasm of unspliced genomic or incompletely spliced subgenomic viral transcripts. The polypeptide is Endogenous retrovirus group K member 104 Rec protein (HERV-K104) (Homo sapiens (Human)).